A 552-amino-acid chain; its full sequence is Protein FAM234A (552 aa).

At 1 to 48 the chain is on the cytoplasmic side; that stretch reads MTDGKDLEAEIHPLKSENRKVPENAGALAGKEPRGTPAPQTRLSHCRT. Residues 49–69 form a helical; Signal-anchor for type II membrane protein membrane-spanning segment; sequence AAFFLSLFACLLVVFVVSFII. The Extracellular segment spans residues 70–552; sequence PCPDRPALQG…LSRLRYRSEA (483 aa). 3 N-linked (GlcNAc...) asparagine glycosylation sites follow: Asn115, Asn238, and Asn473.

Belongs to the FAM234 family.

It localises to the membrane. The sequence is that of Protein FAM234A (FAM234A) from Bos taurus (Bovine).